Here is a 101-residue protein sequence, read N- to C-terminus: Olivetolic acid cyclase (101 aa).

The 95-residue stretch at 3–97 (VKHLIVLKFK…FWEKLLIFDY (95 aa)) folds into the Stress-response A/B barrel domain. A 3,5,7-trioxododecanoyl-CoA-binding site is contributed by His-5. Residues Val-31, Ile-34, and Met-37 each coordinate Mg(2+). Tyr-72 serves as a coordination point for 3,5,7-trioxododecanoyl-CoA. Residues Tyr-72 and His-75 each act as acid/base catalyst in the active site.

As to quaternary structure, homodimer. Expressed in glandular trichomes and at lower levels in female flowers.

Its subcellular location is the cytoplasm. The enzyme catalyses 3,5,7-trioxododecanoyl-CoA = olivetolate + CoA + H(+). Its pathway is secondary metabolite biosynthesis; terpenoid biosynthesis. In terms of biological role, involved in the biosynthesis of cannabinoids-related terpenophenolic natural products, which have pharmacological activity. Polyketide cyclase which functions in concert with OLS/TKS to form olivetolic acid. Has no intrinsic polyketide synthase activity and requires the presence of OLS to produce olivetolic acid. The chain is Olivetolic acid cyclase from Cannabis sativa (Hemp).